The sequence spans 232 residues: Ion-translocating oxidoreductase complex subunit E (232 aa).

The next 6 membrane-spanning stretches (helical) occupy residues 18 to 38, 39 to 59, 69 to 89, 93 to 113, 127 to 147, and 182 to 202; these read GLVQ…LTNA, LGLG…VSLV, IPVF…LINA, GLYL…IIIG, AAFD…VLGA, and PFLL…LIAL.

It belongs to the NqrDE/RnfAE family. The complex is composed of six subunits: RnfA, RnfB, RnfC, RnfD, RnfE and RnfG.

It is found in the cell inner membrane. In terms of biological role, part of a membrane-bound complex that couples electron transfer with translocation of ions across the membrane. The chain is Ion-translocating oxidoreductase complex subunit E from Shewanella sp. (strain MR-4).